Consider the following 1054-residue polypeptide: Desmoglein-1 (1054 aa).

Positions 1–23 are cleaved as a signal peptide; sequence MNWHFLRTATVLLIFLVVVEINS. The propeptide occupies 24–49; that stretch reads EFRIQVRDYNTKNGTIKWHSIRRQKR. Asn-36, Asn-110, and Asn-180 each carry an N-linked (GlcNAc...) asparagine glycan. 4 consecutive Cadherin domains span residues 50 to 157, 158 to 269, 270 to 389, and 386 to 493; these read EWIK…PPVF, SMST…IPYM, EPSS…RPGS, and RPGS…KDSE. Topologically, residues 50–566 are extracellular; that stretch reads EWIKFAAACR…NLSDNVHFGP (517 aa). The disordered stretch occupies residues 487–554; that stretch reads GWEKDSEKVT…QSNNNHQELG (68 aa). The span at 496-507 shows a compositional bias: low complexity; sequence TSSQNSGSSTGD. Gly residues predominate over residues 508 to 517; that stretch reads SSGGTGGGGR. The segment covering 523 to 534 has biased composition (low complexity); it reads GDTTTNTGGKTS. Over residues 542 to 554 the composition is skewed to polar residues; it reads TQTQSNNNHQELG. A glycan (N-linked (GlcNAc...) asparagine) is linked at Asn-557. The chain crosses the membrane as a helical span at residues 567–587; sequence AGIGLLIMGFLVLGLVPFLLM. Residues 588-1054 lie on the Cytoplasmic side of the membrane; it reads CCDCGGAPGA…TKYSTVQYTK (467 aa). Desmoglein repeat repeat units follow at residues 830–856, 857–886, 887–916, 917–944, and 945–973; these read TYPS…TVTE, SYTT…ERVV, GPIS…ERVI, APSS…ERVI, and RPAS…ERVV. Residues 1018 to 1040 are disordered; that stretch reads GHVRSSSDHHFSQTLGSASPSTA. Residues 1029–1040 show a composition bias toward polar residues; that stretch reads SQTLGSASPSTA.

As to quaternary structure, binds to JUP/plakoglobin. Interacts with PKP2. Interacts with DSC3; there is evidence to suggest that the interaction promotes cell-cell adhesion of keratinocytes.

The protein resides in the cell membrane. It is found in the cell junction. Its subcellular location is the desmosome. It localises to the cytoplasm. The protein localises to the nucleus. Functionally, component of intercellular desmosome junctions. Involved in the interaction of plaque proteins and intermediate filaments mediating cell-cell adhesion. The protein is Desmoglein-1 (DSG1) of Canis lupus familiaris (Dog).